A 162-amino-acid polypeptide reads, in one-letter code: NADH-quinone oxidoreductase subunit I (162 aa).

2 4Fe-4S ferredoxin-type domains span residues 54–83 (RRYE…IESE) and 93–122 (TRYD…ETHI). [4Fe-4S] cluster is bound by residues Cys-63, Cys-66, Cys-69, Cys-73, Cys-102, Cys-105, Cys-108, and Cys-112.

This sequence belongs to the complex I 23 kDa subunit family. In terms of assembly, NDH-1 is composed of 14 different subunits. Subunits NuoA, H, J, K, L, M, N constitute the membrane sector of the complex. Requires [4Fe-4S] cluster as cofactor.

It localises to the cell inner membrane. It catalyses the reaction a quinone + NADH + 5 H(+)(in) = a quinol + NAD(+) + 4 H(+)(out). Functionally, NDH-1 shuttles electrons from NADH, via FMN and iron-sulfur (Fe-S) centers, to quinones in the respiratory chain. The immediate electron acceptor for the enzyme in this species is believed to be ubiquinone. Couples the redox reaction to proton translocation (for every two electrons transferred, four hydrogen ions are translocated across the cytoplasmic membrane), and thus conserves the redox energy in a proton gradient. This is NADH-quinone oxidoreductase subunit I from Paraburkholderia xenovorans (strain LB400).